Here is a 791-residue protein sequence, read N- to C-terminus: MKKPILISRAIVVLPYETTTIEVGRPKSIQAIDLAKQSSSKEIIIISQKDIDTDEVVNFDELYKVGTLVKIKSIIDNFDEGYSIEVEGLKAVYINNENDVIDAIEYEYEDVITNPILSNKDEIAINGINSEIFNIINKRSRHKNINFDNMHALISLEKEKFAYLAAATYINDYDNEISEKTIEDRINILLQPNLLLVHETILHLLFDQLVDKRVIEDEVEKTITDKINNNFQKQQREFYLREKLKVVKEQLGELSSREEDADKIRAKIEDLELPPNVKERALAELNRFENAMSSNESSVIKSYLDWLLDLPWTQQGVDNTDLMSVRTHLDDNHYGIEKVKERILEYLALRMRNPNLKGPIICLVGPPGVGKTSLVTSIAQALNKKFVKVSLGGVRDESEIRGHRKTYVGAMPGRIIKGMKKAGVINPLFLLDEIDKMTSDQRGDPAAAMLEVLDPEQNKNFSDNYIEEEYDLSKVMFMATANYYQQIPYALIDRLEVIELSSYTAIEKREIAKSHLLKRIFMDAKLNENELIFTDDALDFIINHYTKEAGVRELDRQLGHIVRKYIVETYKNKNNQSPLNLKVDEAMIIKYLGKIKFDFNKKEETTIPGIVNGMAYTAAGGDLLPIEVNHSTNGKGGNVTITGNLEKTMNESVSVALGFVKANADKYGIDTKKVSFKEIDIHVHVPSGGIPKDGPSAGIAITTAIISSLSQRPVRTTLSMTGEIMLRGNVGIIGGVKEKVISAYRAGVREIILPIDDERYLEDVPKYILDDIKIHLVKHYDEVYNIVFGEK.

In terms of domain architecture, Lon N-terminal spans 3–209 (KPILISRAIV…TILHLLFDQL (207 aa)). Residue 365–372 (GPPGVGKT) coordinates ATP. The Lon proteolytic domain occupies 605–790 (TTIPGIVNGM…DEVYNIVFGE (186 aa)). Residues serine 696 and lysine 739 contribute to the active site.

The protein belongs to the peptidase S16 family. In terms of assembly, homohexamer. Organized in a ring with a central cavity.

Its subcellular location is the cytoplasm. The enzyme catalyses Hydrolysis of proteins in presence of ATP.. In terms of biological role, ATP-dependent serine protease that mediates the selective degradation of mutant and abnormal proteins as well as certain short-lived regulatory proteins. Required for cellular homeostasis and for survival from DNA damage and developmental changes induced by stress. Degrades polypeptides processively to yield small peptide fragments that are 5 to 10 amino acids long. Binds to DNA in a double-stranded, site-specific manner. The protein is Lon protease of Ureaplasma parvum serovar 3 (strain ATCC 27815 / 27 / NCTC 11736).